Reading from the N-terminus, the 546-residue chain is Plastidic glucose transporter 4 (546 aa).

Transmembrane regions (helical) follow at residues 105–125 (VLPF…HLGV), 148–168 (WIVS…GALA), 182–202 (IPLA…TMIV), 205–225 (LLAG…ISEI), 240–260 (LFIC…AANP), 265–285 (TMFG…AFSP), 345–365 (VVSV…NAVV), 381–401 (VAAS…ASSL), 410–430 (LLLT…LSFT), 441–461 (LAVV…GPVP), 477–497 (AVAL…LYFL), and 503–523 (FGIS…VLYI).

Belongs to the major facilitator superfamily. Sugar transporter (TC 2.A.1.1) family.

Its subcellular location is the plastid. The protein localises to the chloroplast inner membrane. Functionally, may be involved in the efflux of glucose towards the cytosol. The polypeptide is Plastidic glucose transporter 4 (Arabidopsis thaliana (Mouse-ear cress)).